Here is a 501-residue protein sequence, read N- to C-terminus: Pentatricopeptide repeat-containing protein At4g16470 (501 aa).

8 PPR repeats span residues 107–141 (EPET…GFAL), 142–172 (NEYL…LKIR), 173–207 (DLIP…RIVP), 208–242 (DQYT…CIKS), 243–273 (NIIV…LSTR), 274–308 (NVIT…GCRP), 309–344 (NPVT…GIEP), and 345–379 (EGQH…EHPP). The type E motif stretch occupies residues 380–455 (VWGSLLGACR…DPGYSQIELQ (76 aa)). A type E(+) motif region spans residues 456 to 486 (GEVHRFMKDDTSHRLSEKIYKKVHEMTSFFM).

It belongs to the PPR family. PCMP-E subfamily.

The polypeptide is Pentatricopeptide repeat-containing protein At4g16470 (PCMP-E12) (Arabidopsis thaliana (Mouse-ear cress)).